The chain runs to 191 residues: Potassium-transporting ATPase KdpC subunit (191 aa).

The helical transmembrane segment at 6-26 (PALVLFILLTLLTGGVYPLLT) threads the bilayer.

The protein belongs to the KdpC family. In terms of assembly, the system is composed of three essential subunits: KdpA, KdpB and KdpC.

It localises to the cell inner membrane. Functionally, part of the high-affinity ATP-driven potassium transport (or Kdp) system, which catalyzes the hydrolysis of ATP coupled with the electrogenic transport of potassium into the cytoplasm. This subunit acts as a catalytic chaperone that increases the ATP-binding affinity of the ATP-hydrolyzing subunit KdpB by the formation of a transient KdpB/KdpC/ATP ternary complex. In Klebsiella pneumoniae (strain 342), this protein is Potassium-transporting ATPase KdpC subunit.